The following is a 707-amino-acid chain: Nucleolin (707 aa).

Residues 1–308 (MVKLAKAGKT…KVEGSEPTTP (308 aa)) form a disordered region. K9, K15, and K16 each carry N6-acetyllysine. Residues 24–46 (VEEDSEDEEMSEDEDDSSGEEEV) are compositionally biased toward acidic residues. S28, S34, S40, and S41 each carry phosphoserine. The segment covering 56–92 (ATTTPAKKVVVSQTKKAAVPTPAKKAAVTPGKKAVAT) has biased composition (low complexity). Repeat unit 1 spans residues 58–65 (TTPAKKVV). The interval 58-135 (TTPAKKVVVS…GAATPAKGAK (78 aa)) is 8 X 8 AA tandem repeats of X-T-P-X-K-K-X-X. S67 carries the phosphoserine modification. Phosphothreonine is present on residues T69, T76, T84, and T92. Repeat copies occupy residues 75–82 (PTPAKKAA), 83–90 (VTPGKKAV), and 91–98 (ATPAKKNI). The residue at position 96 (K96) is an N6-acetyllysine. Residue T99 is modified to Phosphothreonine. The stretch at 99–104 (TPAKVI) is one 5; truncated repeat. Residue K102 is modified to N6-acetyllysine. The stretch at 105–112 (PTPGKKGA) is repeat 6. Phosphothreonine is present on T106. 2 positions are modified to N6-acetyllysine: K109 and K116. Repeat copies occupy residues 120–127 (PTPGKKGA) and 128–135 (ATPAKGAK). The residue at position 121 (T121) is a Phosphothreonine. The span at 121–137 (TPGKKGAATPAKGAKNG) shows a compositional bias: low complexity. K124 carries the N6-acetyllysine modification. Phosphoserine is present on residues S145 and S157. The span at 145–170 (SDEDEDEEDEDDSDEDEDDEEEDEFE) shows a compositional bias: acidic residues. The span at 179–188 (PAKAAPAAPA) shows a compositional bias: low complexity. 2 positions are modified to phosphoserine: S189 and S212. The span at 189–217 (SEDEEDDEDEDDEEDDDEEEEDDSEEEVM) shows a compositional bias: acidic residues. The residue at position 220 (T220) is a Phosphothreonine. Acidic residues predominate over residues 241-273 (EEEDDEEEDEDDEDEDDEEEDDEDDDEEEEEEE). Basic and acidic residues predominate over residues 286–302 (MTKQKEAPEAKKQKVEG). Residue K299 forms a Glycyl lysine isopeptide (Lys-Gly) (interchain with G-Cter in SUMO1); alternate linkage. A Glycyl lysine isopeptide (Lys-Gly) (interchain with G-Cter in SUMO2); alternate cross-link involves residue K299. S303 is modified (phosphoserine). RRM domains are found at residues 309-385 (FNLF…KPKG) and 395-468 (RTLL…YTGE). K320 is subject to N6-acetyllysine. Residue K326 forms a Glycyl lysine isopeptide (Lys-Gly) (interchain with G-Cter in SUMO1); alternate linkage. A Glycyl lysine isopeptide (Lys-Gly) (interchain with G-Cter in SUMO2); alternate cross-link involves residue K326. K350 carries the N6-acetyllysine modification. The residue at position 358 (S358) is a Phosphoserine. T369 carries the phosphothreonine modification. K372 participates in a covalent cross-link: Glycyl lysine isopeptide (Lys-Gly) (interchain with G-Cter in SUMO2). K379 is covalently cross-linked (Glycyl lysine isopeptide (Lys-Gly) (interchain with G-Cter in SUMO2); alternate). K379 carries the post-translational modification N6-acetyllysine; alternate. N6-acetyllysine is present on K400. S403 bears the Phosphoserine mark. T407 bears the Phosphothreonine mark. N6-acetyllysine occurs at positions 429 and 446. S460 and S462 each carry phosphoserine. K469 and K478 each carry N6-acetyllysine. RRM domains are found at residues 487–561 (KTLV…LQGS) and 569–644 (KTLF…WAKP). K514 participates in a covalent cross-link: Glycyl lysine isopeptide (Lys-Gly) (interchain with G-Cter in SUMO2); alternate. K514 carries the N6-acetyllysine; alternate modification. Residues K522 and K569 each carry the N6-acetyllysine modification. K574 is covalently cross-linked (Glycyl lysine isopeptide (Lys-Gly) (interchain with G-Cter in SUMO2); alternate). K574 is subject to N6-acetyllysine; alternate. Phosphoserine is present on S577. Residue K586 forms a Glycyl lysine isopeptide (Lys-Gly) (interchain with G-Cter in SUMO1); alternate linkage. K586 is covalently cross-linked (Glycyl lysine isopeptide (Lys-Gly) (interchain with G-Cter in SUMO2); alternate). Residues S588 and S616 each carry the phosphoserine modification. K621 participates in a covalent cross-link: Glycyl lysine isopeptide (Lys-Gly) (interchain with G-Cter in SUMO2). The interval 639-707 (LDWAKPKGEG…KPQGKKTKFE (69 aa)) is disordered. At K643 the chain carries N6-acetyllysine. Positions 647–696 (EGGFGGRGGGRGGFGGRGGGRGGRGGFGGRGRGGFGGRGGFRGGRGGGGD) are enriched in gly residues. Asymmetric dimethylarginine is present on residues R653, R657, R663, R667, R670, R676, R678, R684, and R688. An Asymmetric dimethylarginine; alternate modification is found at R691. An Omega-N-methylarginine; alternate modification is found at R691.

In terms of assembly, identified in a IGF2BP1-dependent mRNP granule complex containing untranslated mRNAs. Component of the SWAP complex that consists of NPM1, NCL/nucleolin, PARP1 and SWAP70. Component of a complex which is at least composed of HTATSF1/Tat-SF1, the P-TEFb complex components CDK9 and CCNT1, RNA polymerase II, SUPT5H, and NCL/nucleolin. Interacts with AICDA. Interacts with APTX. Interacts with C1QBP. Interacts with ERBB4. Interacts (via C-terminus) with FMR1 isoform 6 (via N-terminus). Interacts with GZF1; this interaction is important for nucleolar localization of GZF1. Interacts with NSUN2. Interacts with NVL. Interacts (via N-terminus domain) with SETX. Interacts (via RRM1 and C-terminal RRM4/Arg/Gly-rich domains) with TERT; the interaction is important for nucleolar localization of TERT. Interacts with WDR46. Interacts with ZFP36. Interacts with LRRC34. Interacts with RRP1B. Interacts with HNRNPU; this interaction occurs during mitosis. Interacts with RIOK1; RIOK1 recruits NCL to PRMT5 for symmetrically methylation. Interacts with ZBTB7B. Interacts with MDK; this interaction promotes NCL clustering and lateral movements of this complex into lipid rafts leading to MDK internalization. Interacts with HDGF. Interacts with ALKBH2. Interacts with IGFBP5; this interaction is necessary for IGFBP5 localization to the nucleus. Interacts with DDX24 (when ubiquitinated); this interaction may be important during ribosome biogenesis. Some glutamate residues are glycylated by TTLL8. This modification occurs exclusively on glutamate residues and results in a glycine chain on the gamma-carboxyl group. Post-translationally, symmetrically methylated by PRMT5. In terms of tissue distribution, expressed in B-cells that have been induced to switch to various Ig isotypes.

The protein resides in the nucleus. The protein localises to the nucleolus. It localises to the cytoplasm. In terms of biological role, nucleolin is the major nucleolar protein of growing eukaryotic cells. It is found associated with intranucleolar chromatin and pre-ribosomal particles. It induces chromatin decondensation by binding to histone H1. It is thought to play a role in pre-rRNA transcription and ribosome assembly. May play a role in the process of transcriptional elongation. Binds RNA oligonucleotides with 5'-UUAGGG-3' repeats more tightly than the telomeric single-stranded DNA 5'-TTAGGG-3' repeats. The polypeptide is Nucleolin (Ncl) (Mus musculus (Mouse)).